The chain runs to 390 residues: Phosphopentomutase (390 aa).

Mn(2+) is bound by residues Asp9, Asp283, His288, Asp324, His325, and His336.

It belongs to the phosphopentomutase family. It depends on Mn(2+) as a cofactor.

The protein resides in the cytoplasm. It catalyses the reaction 2-deoxy-alpha-D-ribose 1-phosphate = 2-deoxy-D-ribose 5-phosphate. The catalysed reaction is alpha-D-ribose 1-phosphate = D-ribose 5-phosphate. It functions in the pathway carbohydrate degradation; 2-deoxy-D-ribose 1-phosphate degradation; D-glyceraldehyde 3-phosphate and acetaldehyde from 2-deoxy-alpha-D-ribose 1-phosphate: step 1/2. Its function is as follows. Isomerase that catalyzes the conversion of deoxy-ribose 1-phosphate (dRib-1-P) and ribose 1-phosphate (Rib-1-P) to deoxy-ribose 5-phosphate (dRib-5-P) and ribose 5-phosphate (Rib-5-P), respectively. This is Phosphopentomutase from Thermotoga petrophila (strain ATCC BAA-488 / DSM 13995 / JCM 10881 / RKU-1).